Reading from the N-terminus, the 210-residue chain is Claudin-4 (210 aa).

Residues 1–7 (MASMGLQ) are Cytoplasmic-facing. Residues 1–103 (MASMGLQVLG…GMLLSVVGGK (103 aa)) are interaction with EPHA2. The helical transmembrane segment at 8–28 (VLGISLAVLGWLGIILSCALP) threads the bilayer. Residues 29 to 81 (MWRVTAFIGSNIVTAQTSWEGLWMNCVVQSTGQMQCKMYDSMLALPQDLQAAR) lie on the Extracellular side of the membrane. Residues Cys54 and Cys64 are joined by a disulfide bond. Residues 82–102 (ALMVISIIVGALGMLLSVVGG) traverse the membrane as a helical segment. The Cytoplasmic portion of the chain corresponds to 103 to 116 (KCTNCMEDETVKAK). The chain crosses the membrane as a helical span at residues 117–137 (IMITAGAVFIVASMLIMVPVS). Over 138–160 (WTAHNVIRDFYNPMVASGQKREM) the chain is Extracellular. Residues 161–181 (GASLYVGWAASGLLLLGGGLL) form a helical membrane-spanning segment. Over 182–210 (CCSCPPRSNDKPYSAKYSAARSVPASNYV) the chain is Cytoplasmic. Position 209 is a phosphotyrosine; by EPHA2 (Tyr209). The interval 209–210 (YV) is interactions with TJP1, TJP2 and TJP3.

Belongs to the claudin family. Can form heteropolymeric strands with other claudins. Interacts with CLDN8. Interacts with CLDN1. Directly interacts with TJP1/ZO-1, TJP2/ZO-2 and TJP3/ZO-3. Interacts with EPHA2; phosphorylates CLDN4 and may regulate tight junctions. In terms of processing, phosphorylated. Phosphorylation by EPHA2 is stimulated by EFNA1 and alters interaction with TJP1. As to expression, expressed primarily in lung and kidney. Present in both cortical and medullar collecting ducts (at protein level).

It is found in the cell junction. The protein localises to the tight junction. It localises to the cell membrane. It carries out the reaction chloride(in) = chloride(out). The catalysed reaction is bromide(in) = bromide(out). The enzyme catalyses iodide(out) = iodide(in). It catalyses the reaction fluoride(in) = fluoride(out). Functionally, can associate with other claudins to regulate tight junction structural and functional strand dynamics. May coassemble with CLDN8 into tight junction strands containing anion-selective channels that convey paracellular chloride permeability in renal collecting ducts. May integrate into CLDN3 strands to modulate localized tight junction barrier properties. May disrupt strand assembly of channel-forming CLDN2 and CLDN15 and inhibit cation conductance. Cannot form tight junction strands on its own. The protein is Claudin-4 of Mus musculus (Mouse).